We begin with the raw amino-acid sequence, 162 residues long: Urease accessory protein UreE 1 (162 aa).

The tract at residues 143–162 (SGGHQHHHGHDHDHHHPDHE) is disordered. Residues 152 to 162 (HDHDHHHPDHE) are compositionally biased toward basic and acidic residues.

The protein belongs to the UreE family.

Its subcellular location is the cytoplasm. Involved in urease metallocenter assembly. Binds nickel. Probably functions as a nickel donor during metallocenter assembly. In Brucella suis biovar 1 (strain 1330), this protein is Urease accessory protein UreE 1.